A 405-amino-acid chain; its full sequence is K(+)/H(+) antiporter subunit KhtU (405 aa).

Helical transmembrane passes span 3-23 (HLVF…VIAN), 29-49 (IIPF…KMGI), 60-80 (IIEF…GLEF), 85-105 (LIKS…INFS), 108-128 (LLYG…AGVI), 153-173 (LILG…SVVS), 183-203 (VGSA…FFIA), 222-242 (VFII…ETIH), 268-288 (LVVP…GLSI), 297-317 (VWLA…AGMV), 332-352 (IGLT…LGIA), and 357-377 (ATLK…GPLV).

This sequence belongs to the monovalent cation:proton antiporter 2 (CPA2) transporter (TC 2.A.37) family. As to quaternary structure, the transporter is composed of the integral membrane protein KhtU and the regulatory protein KhtT.

The protein localises to the cell membrane. Potassium antiport activity requires the presence of KhtT. Activity is also modulated by KhtS. Has higher activity at alkaline pH. In terms of biological role, potassium/proton antiporter that mediates the efflux of potassium ions from the cell. Can also mediate rubidium/proton antiport, but has no permeability for sodium or lithium ions. In the absence of KhtT, does not have antiport activity, but can catalyze potassium efflux. Involved in protection of the cell from methylglyoxal, a toxic by-product of glycolysis, via activation by S-lactoyl-BSH of the antiporter activity, leading to cytoplasmic acidification and methylglyoxal resistance. The chain is K(+)/H(+) antiporter subunit KhtU from Bacillus subtilis (strain 168).